The chain runs to 76 residues: Large ribosomal subunit protein uL29 (76 aa).

This sequence belongs to the universal ribosomal protein uL29 family.

The protein is Large ribosomal subunit protein uL29 of Corynebacterium glutamicum (strain R).